The sequence spans 138 residues: Putative pre-16S rRNA nuclease (138 aa).

Belongs to the YqgF nuclease family.

The protein localises to the cytoplasm. Its function is as follows. Could be a nuclease involved in processing of the 5'-end of pre-16S rRNA. In Escherichia fergusonii (strain ATCC 35469 / DSM 13698 / CCUG 18766 / IAM 14443 / JCM 21226 / LMG 7866 / NBRC 102419 / NCTC 12128 / CDC 0568-73), this protein is Putative pre-16S rRNA nuclease.